A 269-amino-acid polypeptide reads, in one-letter code: UPF0162 protein BUsg_167 (269 aa).

This sequence belongs to the UPF0162 family.

In Buchnera aphidicola subsp. Schizaphis graminum (strain Sg), this protein is UPF0162 protein BUsg_167.